The following is a 282-amino-acid chain: MGKGNEDPDLHCSSIQCSTDQPPFQQISFTEKGSDEKKPFKGKGKTAFSHSSEKHTQRQAGSDPNPNKENSEETKLKAGNSTAGSEPESSSYQENCRKRKISSKDICQDRAGNCPEEECNLTLNKKSRSSTAVHNSEIQETCDAHHRGSSRACTGRSKRHRSRALEVQTPSLRKSLVTSVRAMSEAVYQDLAQVWAQQIHSPLTCEQLTLLTRLRGPLCAQVQTLYSMATQAAYVFPAESWLVPATLPGPGDSALDREAHPFPGQEITEPVSGSDEAKLGAP.

A compositionally biased stretch (basic and acidic residues) spans 1-10; sequence MGKGNEDPDL. Disordered stretches follow at residues 1–96 and 249–282; these read MGKG…QENC and GPGD…LGAP. Polar residues-rich tracts occupy residues 13–31, 58–68, and 79–94; these read SSIQ…SFTE, RQAGSDPNPNK, and GNST…SYQE.

The protein belongs to the FRG2 family.

Its subcellular location is the nucleus. This is Protein FRG2-like-2 (FRG2C) from Homo sapiens (Human).